Reading from the N-terminus, the 246-residue chain is NAD-dependent protein deacetylase (246 aa).

A Deacetylase sirtuin-type domain is found at 1-246 (MKKPDIQQLK…VIEEIVNSNS (246 aa)). NAD(+)-binding residues include alanine 25, phenylalanine 36, arginine 37, glutamine 106, isoleucine 108, aspartate 109, and histidine 124. Phenylalanine 36 contacts nicotinamide. Residues isoleucine 108 and aspartate 109 each contribute to the nicotinamide site. Residue histidine 124 is the Proton acceptor of the active site. Zn(2+) is bound by residues cysteine 132, cysteine 135, cysteine 152, and cysteine 155. Serine 193, serine 194, asparagine 216, and aspartate 233 together coordinate NAD(+).

The protein belongs to the sirtuin family. Class U subfamily. It depends on Zn(2+) as a cofactor.

It localises to the cytoplasm. It carries out the reaction N(6)-acetyl-L-lysyl-[protein] + NAD(+) + H2O = 2''-O-acetyl-ADP-D-ribose + nicotinamide + L-lysyl-[protein]. Its function is as follows. NAD-dependent protein deacetylase which modulates the activities of several enzymes which are inactive in their acetylated form. This chain is NAD-dependent protein deacetylase, found in Staphylococcus epidermidis (strain ATCC 35984 / DSM 28319 / BCRC 17069 / CCUG 31568 / BM 3577 / RP62A).